Reading from the N-terminus, the 180-residue chain is MFHATTILAYKGKNKSVIGGDGQVSFGNTVLKGNAVKIRKLNNGKVLAGFAGSTADAFNLFDMFENLLQSSKGDLLKAAIDFSKEWRKDKYLRKLEAMMLVLDRNHIFLLSGTGDVVEPEDGQIAAIGSGGNYALSAARALAKHTDLDEEELVKSSLQIAGEICIYTNTNIKTYVIEDEK.

The active site involves threonine 5. Na(+)-binding residues include glycine 161, cysteine 164, and threonine 167.

Belongs to the peptidase T1B family. HslV subfamily. A double ring-shaped homohexamer of HslV is capped on each side by a ring-shaped HslU homohexamer. The assembly of the HslU/HslV complex is dependent on binding of ATP.

It localises to the cytoplasm. The catalysed reaction is ATP-dependent cleavage of peptide bonds with broad specificity.. Its activity is regulated as follows. Allosterically activated by HslU binding. In terms of biological role, protease subunit of a proteasome-like degradation complex believed to be a general protein degrading machinery. This Campylobacter jejuni subsp. jejuni serotype O:2 (strain ATCC 700819 / NCTC 11168) protein is ATP-dependent protease subunit HslV.